The primary structure comprises 151 residues: Chaperonin GroEL (151 aa).

Residue 41 to 45 (DGTTT) coordinates ATP.

This sequence belongs to the chaperonin (HSP60) family. In terms of assembly, forms a cylinder of 14 subunits composed of two heptameric rings stacked back-to-back. Interacts with the co-chaperonin GroES.

The protein resides in the cytoplasm. The enzyme catalyses ATP + H2O + a folded polypeptide = ADP + phosphate + an unfolded polypeptide.. Functionally, together with its co-chaperonin GroES, plays an essential role in assisting protein folding. The GroEL-GroES system forms a nano-cage that allows encapsulation of the non-native substrate proteins and provides a physical environment optimized to promote and accelerate protein folding. The polypeptide is Chaperonin GroEL (Mycobacterium marinum).